Consider the following 87-residue polypeptide: Cell division topological specificity factor (87 aa).

It belongs to the MinE family.

Its function is as follows. Prevents the cell division inhibition by proteins MinC and MinD at internal division sites while permitting inhibition at polar sites. This ensures cell division at the proper site by restricting the formation of a division septum at the midpoint of the long axis of the cell. This Neisseria gonorrhoeae (strain ATCC 700825 / FA 1090) protein is Cell division topological specificity factor.